Consider the following 845-residue polypeptide: Protein translocase subunit SecA (845 aa).

ATP contacts are provided by residues Gln-85, 103–107 (GEGKT), and Asp-492. Residues 787-845 (REQVAQGQAEHPETEQDAAAQSNTSAKRQPVRVDKKVGRNDLCPCGSGKKFKNCHGRNA) are disordered. Zn(2+) is bound by residues Cys-829, Cys-831, Cys-840, and His-841. A compositionally biased stretch (basic residues) spans 835 to 845 (KKFKNCHGRNA).

It belongs to the SecA family. Monomer and homodimer. Part of the essential Sec protein translocation apparatus which comprises SecA, SecYEG and auxiliary proteins SecDF. Other proteins may also be involved. Zn(2+) is required as a cofactor.

It localises to the cell membrane. It is found in the cytoplasm. The catalysed reaction is ATP + H2O + cellular proteinSide 1 = ADP + phosphate + cellular proteinSide 2.. Its function is as follows. Part of the Sec protein translocase complex. Interacts with the SecYEG preprotein conducting channel. Has a central role in coupling the hydrolysis of ATP to the transfer of proteins into and across the cell membrane, serving as an ATP-driven molecular motor driving the stepwise translocation of polypeptide chains across the membrane. The sequence is that of Protein translocase subunit SecA from Enterococcus faecalis (strain ATCC 700802 / V583).